A 119-amino-acid chain; its full sequence is Large ribosomal subunit protein uL18 (119 aa).

The protein belongs to the universal ribosomal protein uL18 family. As to quaternary structure, part of the 50S ribosomal subunit; part of the 5S rRNA/L5/L18/L25 subcomplex. Contacts the 5S and 23S rRNAs.

Functionally, this is one of the proteins that bind and probably mediate the attachment of the 5S RNA into the large ribosomal subunit, where it forms part of the central protuberance. The chain is Large ribosomal subunit protein uL18 from Chlorobium luteolum (strain DSM 273 / BCRC 81028 / 2530) (Pelodictyon luteolum).